A 188-amino-acid polypeptide reads, in one-letter code: Phosphoribosylglycinamide formyltransferase (188 aa).

12 to 14 (GSN) lines the N(1)-(5-phospho-beta-D-ribosyl)glycinamide pocket. (6R)-10-formyltetrahydrofolate is bound by residues lysine 66, 91 to 94 (MRLI), and asparagine 108. Residue histidine 110 is the Proton donor of the active site.

The protein belongs to the GART family.

The catalysed reaction is N(1)-(5-phospho-beta-D-ribosyl)glycinamide + (6R)-10-formyltetrahydrofolate = N(2)-formyl-N(1)-(5-phospho-beta-D-ribosyl)glycinamide + (6S)-5,6,7,8-tetrahydrofolate + H(+). It functions in the pathway purine metabolism; IMP biosynthesis via de novo pathway; N(2)-formyl-N(1)-(5-phospho-D-ribosyl)glycinamide from N(1)-(5-phospho-D-ribosyl)glycinamide (10-formyl THF route): step 1/1. Catalyzes the transfer of a formyl group from 10-formyltetrahydrofolate to 5-phospho-ribosyl-glycinamide (GAR), producing 5-phospho-ribosyl-N-formylglycinamide (FGAR) and tetrahydrofolate. This is Phosphoribosylglycinamide formyltransferase from Staphylococcus aureus (strain COL).